The sequence spans 492 residues: Glutamyl-tRNA(Gln) amidotransferase subunit A (492 aa).

Residues K84 and S159 each act as charge relay system in the active site. The Acyl-ester intermediate role is filled by S183.

This sequence belongs to the amidase family. GatA subfamily. Heterotrimer of A, B and C subunits.

It catalyses the reaction L-glutamyl-tRNA(Gln) + L-glutamine + ATP + H2O = L-glutaminyl-tRNA(Gln) + L-glutamate + ADP + phosphate + H(+). Functionally, allows the formation of correctly charged Gln-tRNA(Gln) through the transamidation of misacylated Glu-tRNA(Gln) in organisms which lack glutaminyl-tRNA synthetase. The reaction takes place in the presence of glutamine and ATP through an activated gamma-phospho-Glu-tRNA(Gln). The protein is Glutamyl-tRNA(Gln) amidotransferase subunit A of Anaeromyxobacter dehalogenans (strain 2CP-C).